The chain runs to 2028 residues: Pecanex-like protein 3 (2028 aa).

2 helical membrane passes run 33–53 (CFHL…YMVL) and 54–74 (PPSL…FATI). Residue asparagine 95 is glycosylated (N-linked (GlcNAc...) asparagine). Residues 96 to 116 (STMGEQEEEAAQGESSLPRDP) are disordered. Phosphoserine is present on serine 127. The residue at position 129 (threonine 129) is a Phosphothreonine. 2 disordered regions span residues 193 to 239 (IGDL…PMSP) and 263 to 625 (LVRT…SHSR). Positions 198–208 (QTPPGVVPDPS) are enriched in pro residues. Basic and acidic residues-rich tracts occupy residues 263–273 (LVRTSSRREQC) and 305–319 (TDRE…EKTN). Residue asparagine 319 is glycosylated (N-linked (GlcNAc...) asparagine). Threonine 370 is subject to Phosphothreonine. Serine 392 and serine 431 each carry phosphoserine. The span at 427–437 (GSELSPASSLR) shows a compositional bias: polar residues. A compositionally biased stretch (low complexity) spans 444 to 459 (TDSSSSTSCYSPESSQ). A compositionally biased stretch (polar residues) spans 488–497 (TQRTPSTASA). Residues serine 505 and serine 521 each carry the phosphoserine modification. 7 consecutive transmembrane segments (helical) span residues 793 to 815 (NIFG…LKGF), 819 to 836 (IWVF…YSLL), 852 to 872 (WVIA…IWLL), 880 to 900 (PFPP…FFCA), 903 to 923 (VATV…LPQV), 946 to 968 (SPLT…YGFC), and 980 to 1000 (HVPV…YHLS). Position 1025 is a phosphoserine (serine 1025). The next 4 membrane-spanning stretches (helical) occupy residues 1053–1073 (LVMC…TVFI), 1078–1098 (VLGF…HYLL), 1244–1264 (FVLT…HAFA), and 1280–1300 (LLSG…VFIM). Serine 1697 carries the post-translational modification Phosphoserine. Asparagine 1770 carries an N-linked (GlcNAc...) asparagine glycan. The interval 1845-2028 (GLTSLSNHPP…AAQPLLEHQY (184 aa)) is disordered. Residues 1890-1921 (RPPPLLQWPPPRLPGPPPASPAPTEGPRPSRP) show a composition bias toward pro residues. Residues serine 1909 and serine 1955 each carry the phosphoserine modification. The segment covering 1966–1977 (PLDLSLSPDVSS) has biased composition (low complexity). Positions 1978–1987 (EASPARTTQD) are enriched in polar residues.

Belongs to the pecanex family.

The protein localises to the membrane. The chain is Pecanex-like protein 3 from Mus musculus (Mouse).